Consider the following 529-residue polypeptide: ATP synthase F(1) complex catalytic subunit beta, mitochondrial (529 aa).

Residues 1–46 constitute a mitochondrion transit peptide; that stretch reads MLSLVGRVASASASGALRGLSPSAALPQAQLLLRAAPAGVHPARDY. O-linked (GlcNAc) serine glycosylation occurs at Ser-106. Residues Lys-124, Lys-133, and Lys-161 each carry the N6-acetyllysine; alternate modification. Residues Lys-124, Lys-133, and Lys-161 each carry the N6-succinyllysine; alternate modification. Position 198 is an N6-acetyllysine (Lys-198). ADP is bound by residues Gly-209, Val-210, Gly-211, Lys-212, Thr-213, and Val-214. Gly-209 lines the ATP pocket. 5 residues coordinate phosphate: Gly-209, Val-210, Gly-211, Lys-212, and Thr-213. ATP is bound by residues Gly-211, Lys-212, Thr-213, and Val-214. Thr-213 is a binding site for Mg(2+). Glu-238 lines the Mg(2+) pocket. Residue Arg-239 participates in ATP binding. N6-acetyllysine; alternate is present on residues Lys-259 and Lys-264. An N6-succinyllysine; alternate mark is found at Lys-259 and Lys-264. Phosphothreonine is present on Thr-312. Residue Lys-426 is modified to N6-acetyllysine. Ser-433 is subject to Phosphoserine. N6-acetyllysine is present on residues Lys-480 and Lys-485. At Lys-522 the chain carries N6-acetyllysine; alternate. N6-succinyllysine; alternate is present on Lys-522. The residue at position 529 (Ser-529) is a Phosphoserine.

It belongs to the ATPase alpha/beta chains family. Homotrimer. Component of the ATP synthase complex composed at least of ATP5F1A/subunit alpha, ATP5F1B/subunit beta, ATP5MC1/subunit c (homooctomer), MT-ATP6/subunit a, MT-ATP8/subunit 8, ATP5ME/subunit e, ATP5MF/subunit f, ATP5MG/subunit g, ATP5MK/subunit k, ATP5MJ/subunit j, ATP5F1C/subunit gamma, ATP5F1D/subunit delta, ATP5F1E/subunit epsilon, ATP5PF/subunit F6, ATP5PB/subunit b, ATP5PD/subunit d, ATP5PO/subunit OSCP. ATP synthase complex consists of a soluble F(1) head domain (subunits alpha(3) and beta(3)) - the catalytic core - and a membrane F(0) domain - the membrane proton channel (subunits c, a, 8, e, f, g, k and j). These two domains are linked by a central stalk (subunits gamma, delta, and epsilon) rotating inside the F1 region and a stationary peripheral stalk (subunits F6, b, d, and OSCP). Interacts with PPIF. Interacts with BCL2L1 isoform BCL-X(L); the interaction mediates the association of BCL2L1 isoform BCL-X(L) with the mitochondrial membrane F(1)F(0) ATP synthase and enhances neurons metabolic efficiency. Interacts with CLN5 and PPT1. Interacts with S100A1; this interaction increases F1-ATPase activity. Interacts with MTLN. Interacts with TTC5/STRAP; the interaction results in decreased mitochondrial ATP production. In terms of processing, acetylation of Lys-133 is observed in liver mitochondria from fasted mice but not from fed mice.

It is found in the mitochondrion inner membrane. The enzyme catalyses ATP + H2O + 4 H(+)(in) = ADP + phosphate + 5 H(+)(out). Functionally, catalytic subunit beta, of the mitochondrial membrane ATP synthase complex (F(1)F(0) ATP synthase or Complex V) that produces ATP from ADP in the presence of a proton gradient across the membrane which is generated by electron transport complexes of the respiratory chain. ATP synthase complex consist of a soluble F(1) head domain - the catalytic core - and a membrane F(1) domain - the membrane proton channel. These two domains are linked by a central stalk rotating inside the F(1) region and a stationary peripheral stalk. During catalysis, ATP synthesis in the catalytic domain of F(1) is coupled via a rotary mechanism of the central stalk subunits to proton translocation. In vivo, can only synthesize ATP although its ATP hydrolase activity can be activated artificially in vitro. With the subunit alpha (ATP5F1A), forms the catalytic core in the F(1) domain. This chain is ATP synthase F(1) complex catalytic subunit beta, mitochondrial, found in Mus musculus (Mouse).